The sequence spans 437 residues: tRNA-2-methylthio-N(6)-dimethylallyladenosine synthase (437 aa).

The MTTase N-terminal domain occupies Met-1–Ala-115. [4Fe-4S] cluster is bound by residues Cys-10, Cys-46, Cys-78, Cys-148, Cys-152, and Cys-155. In terms of domain architecture, Radical SAM core spans Lys-134 to Glu-367. Residues Lys-370–Gly-436 enclose the TRAM domain.

It belongs to the methylthiotransferase family. MiaB subfamily. In terms of assembly, monomer. [4Fe-4S] cluster serves as cofactor.

It localises to the cytoplasm. The catalysed reaction is N(6)-dimethylallyladenosine(37) in tRNA + (sulfur carrier)-SH + AH2 + 2 S-adenosyl-L-methionine = 2-methylsulfanyl-N(6)-dimethylallyladenosine(37) in tRNA + (sulfur carrier)-H + 5'-deoxyadenosine + L-methionine + A + S-adenosyl-L-homocysteine + 2 H(+). Its function is as follows. Catalyzes the methylthiolation of N6-(dimethylallyl)adenosine (i(6)A), leading to the formation of 2-methylthio-N6-(dimethylallyl)adenosine (ms(2)i(6)A) at position 37 in tRNAs that read codons beginning with uridine. The chain is tRNA-2-methylthio-N(6)-dimethylallyladenosine synthase from Helicobacter pylori (strain ATCC 700392 / 26695) (Campylobacter pylori).